The primary structure comprises 141 residues: Hemoglobin subunit alpha-2 (141 aa).

At Ser1 the chain carries N-acetylserine. Positions 1-141 (SLSTKDKETV…LARALSEKYR (141 aa)) constitute a Globin domain. His59 lines the O2 pocket. Residue His88 coordinates heme b.

Belongs to the globin family. In terms of assembly, hb2 is a heterotetramer of two alpha-2 chains and two beta chains. In terms of tissue distribution, red blood cells.

Its function is as follows. Involved in oxygen transport from gills to the various peripheral tissues. The sequence is that of Hemoglobin subunit alpha-2 (hba2) from Notothenia angustata (Rockcod).